The following is a 314-amino-acid chain: MALVDETSIDEAGFRMSEATAGDFFALLKPRVMSLVVFTAFVGLVAAPVTINPLLAVIAILSIAIGAGASGALNMWYDADIDAVMTRTASRPVPSGRIQPHEALSFGLVLSVLSVMTLGVLVNWLSATLLAFTIFFYAVVYTMWLKRWTPQNIVIGGAAGAIPPVIGWAAVTGSVSLESIVLFLIIFLWTPPHFWALALFKSGDYERAGIPMMPNVAGHASTRRQIFAYALVLAPVGVAPWLLGYTTPFYGVAAMLLGLGFVWYAWKVLGMADDDRAMKPAKALFAYSLLYLFAIFAAYLADSVVERALAMGGA.

9 helical membrane passes run V32–V49, L54–W76, I98–L118, V120–V140, I153–G173, I180–F200, I226–T246, F249–L269, and F285–V305.

It belongs to the UbiA prenyltransferase family. Protoheme IX farnesyltransferase subfamily.

It localises to the cell inner membrane. It catalyses the reaction heme b + (2E,6E)-farnesyl diphosphate + H2O = Fe(II)-heme o + diphosphate. Its pathway is porphyrin-containing compound metabolism; heme O biosynthesis; heme O from protoheme: step 1/1. In terms of biological role, converts heme B (protoheme IX) to heme O by substitution of the vinyl group on carbon 2 of heme B porphyrin ring with a hydroxyethyl farnesyl side group. This chain is Protoheme IX farnesyltransferase 2, found in Mesorhizobium japonicum (strain LMG 29417 / CECT 9101 / MAFF 303099) (Mesorhizobium loti (strain MAFF 303099)).